A 616-amino-acid polypeptide reads, in one-letter code: Chaperone protein DnaK (616 aa).

Position 174 is a phosphothreonine; by autocatalysis (Thr-174). Residues 576–616 form a disordered region; the sequence is QASAPGAGPEGASGGFGGENKKDDNVVDADYTVIDDDKKKT. The span at 583–593 shows a compositional bias: gly residues; that stretch reads GPEGASGGFGG.

Belongs to the heat shock protein 70 family.

In terms of biological role, acts as a chaperone. The chain is Chaperone protein DnaK from Heliobacterium modesticaldum (strain ATCC 51547 / Ice1).